Consider the following 922-residue polypeptide: Protein translocase subunit SecA (922 aa).

Residues Gln87, 105 to 109 (GEGKT), and Asp519 contribute to the ATP site. Positions 850–891 (HASRQMRSIQGNAQHNSMGSFSGSGHGMGPTALSARSRPENA) are disordered. The segment covering 854-865 (QMRSIQGNAQHN) has biased composition (polar residues). Cys906, Cys908, Cys917, and Cys918 together coordinate Zn(2+).

The protein belongs to the SecA family. In terms of assembly, monomer and homodimer. Part of the essential Sec protein translocation apparatus which comprises SecA, SecYEG and auxiliary proteins SecDF. Other proteins may also be involved. Requires Zn(2+) as cofactor.

The protein resides in the cell inner membrane. The protein localises to the cytoplasm. It carries out the reaction ATP + H2O + cellular proteinSide 1 = ADP + phosphate + cellular proteinSide 2.. Its function is as follows. Part of the Sec protein translocase complex. Interacts with the SecYEG preprotein conducting channel. Has a central role in coupling the hydrolysis of ATP to the transfer of proteins into and across the cell membrane, serving as an ATP-driven molecular motor driving the stepwise translocation of polypeptide chains across the membrane. In Treponema denticola (strain ATCC 35405 / DSM 14222 / CIP 103919 / JCM 8153 / KCTC 15104), this protein is Protein translocase subunit SecA.